The primary structure comprises 457 residues: Exodeoxyribonuclease 7 large subunit (457 aa).

This sequence belongs to the XseA family. In terms of assembly, heterooligomer composed of large and small subunits.

It is found in the cytoplasm. The catalysed reaction is Exonucleolytic cleavage in either 5'- to 3'- or 3'- to 5'-direction to yield nucleoside 5'-phosphates.. Bidirectionally degrades single-stranded DNA into large acid-insoluble oligonucleotides, which are then degraded further into small acid-soluble oligonucleotides. This chain is Exodeoxyribonuclease 7 large subunit, found in Photorhabdus laumondii subsp. laumondii (strain DSM 15139 / CIP 105565 / TT01) (Photorhabdus luminescens subsp. laumondii).